Consider the following 273-residue polypeptide: ATP synthase subunit delta (273 aa).

This sequence belongs to the ATPase delta chain family. In terms of assembly, F-type ATPases have 2 components, F(1) - the catalytic core - and F(0) - the membrane proton channel. F(1) has five subunits: alpha(3), beta(3), gamma(1), delta(1), epsilon(1). F(0) has three main subunits: a(1), b(2) and c(10-14). The alpha and beta chains form an alternating ring which encloses part of the gamma chain. F(1) is attached to F(0) by a central stalk formed by the gamma and epsilon chains, while a peripheral stalk is formed by the delta and b chains.

It localises to the cell membrane. In terms of biological role, f(1)F(0) ATP synthase produces ATP from ADP in the presence of a proton or sodium gradient. F-type ATPases consist of two structural domains, F(1) containing the extramembraneous catalytic core and F(0) containing the membrane proton channel, linked together by a central stalk and a peripheral stalk. During catalysis, ATP synthesis in the catalytic domain of F(1) is coupled via a rotary mechanism of the central stalk subunits to proton translocation. Functionally, this protein is part of the stalk that links CF(0) to CF(1). It either transmits conformational changes from CF(0) to CF(1) or is implicated in proton conduction. The chain is ATP synthase subunit delta from Streptomyces avermitilis (strain ATCC 31267 / DSM 46492 / JCM 5070 / NBRC 14893 / NCIMB 12804 / NRRL 8165 / MA-4680).